The chain runs to 219 residues: Probable nicotinate-nucleotide adenylyltransferase (219 aa).

It belongs to the NadD family.

The enzyme catalyses nicotinate beta-D-ribonucleotide + ATP + H(+) = deamido-NAD(+) + diphosphate. The protein operates within cofactor biosynthesis; NAD(+) biosynthesis; deamido-NAD(+) from nicotinate D-ribonucleotide: step 1/1. Catalyzes the reversible adenylation of nicotinate mononucleotide (NaMN) to nicotinic acid adenine dinucleotide (NaAD). The chain is Probable nicotinate-nucleotide adenylyltransferase from Pseudomonas putida (strain GB-1).